The chain runs to 1265 residues: DNA-directed RNA polymerase subunit beta'' (1265 aa).

Zn(2+)-binding residues include Cys223, Cys297, Cys304, and Cys307.

It belongs to the RNA polymerase beta' chain family. RpoC2 subfamily. As to quaternary structure, in plastids the minimal PEP RNA polymerase catalytic core is composed of four subunits: alpha, beta, beta', and beta''. When a (nuclear-encoded) sigma factor is associated with the core the holoenzyme is formed, which can initiate transcription. Zn(2+) is required as a cofactor.

The protein localises to the plastid. It localises to the cyanelle. The catalysed reaction is RNA(n) + a ribonucleoside 5'-triphosphate = RNA(n+1) + diphosphate. Its function is as follows. DNA-dependent RNA polymerase catalyzes the transcription of DNA into RNA using the four ribonucleoside triphosphates as substrates. In Cyanophora paradoxa, this protein is DNA-directed RNA polymerase subunit beta''.